A 191-amino-acid polypeptide reads, in one-letter code: Elongation factor P (191 aa).

It belongs to the elongation factor P family.

The protein resides in the cytoplasm. It participates in protein biosynthesis; polypeptide chain elongation. Involved in peptide bond synthesis. Stimulates efficient translation and peptide-bond synthesis on native or reconstituted 70S ribosomes in vitro. Probably functions indirectly by altering the affinity of the ribosome for aminoacyl-tRNA, thus increasing their reactivity as acceptors for peptidyl transferase. This is Elongation factor P from Janthinobacterium sp. (strain Marseille) (Minibacterium massiliensis).